The chain runs to 469 residues: Gamma-aminobutyric acid permease (469 aa).

Over 1-17 (MNQSQSGLKKELKTRHM) the chain is Cytoplasmic. A helical transmembrane segment spans residues 18–38 (TMISIAGVIGAGLFVGSGSVI). A topological domain (extracellular) is located at residue His39. The chain crosses the membrane as a helical span at residues 40–60 (STGPGAVVSYALAGLLVIFIM). The Cytoplasmic segment spans residues 61-94 (RMLGEMSAVNPTSGSFSQYAHDAIGPWAGFTIGW). The chain crosses the membrane as a helical span at residues 95–115 (LYWFFWVIVIAIEAIAGAGII). Residue Gln116 is a topological domain, extracellular. Residues 117-137 (YWFHDIPLWLTSLILTIVLTL) traverse the membrane as a helical segment. Residues 138 to 157 (TNVYSVKSFGEFEYWFSLIK) are Cytoplasmic-facing. The chain crosses the membrane as a helical span at residues 158–178 (VVTIIAFLIVGFAFIFGFAPG). Residues 179-200 (SEPVGFSNLTGKGGFFPEGISS) lie on the Extracellular side of the membrane. A helical membrane pass occupies residues 201–221 (VLLGIVVVIFSFMGTEIVAIA). Over 222–242 (AGETSNPIESVTKATRSVVWR) the chain is Cytoplasmic. The helical transmembrane segment at 243–263 (IIVFYVGSIAIVVALLPWNSA) threads the bilayer. Residues 264 to 269 (NILESP) are Extracellular-facing. Residues 270-290 (FVAVLEHIGVPAAAQIMNFIV) traverse the membrane as a helical segment. At 291–328 (LTAVLSCLNSGLYTTSRMLYSLAERNEAPRRFMKLSKK) the chain is on the cytoplasmic side. A helical membrane pass occupies residues 329 to 349 (GVPVQAIVAGTFFSYIAVVMN). The Extracellular segment spans residues 350–355 (YFSPDT). A helical membrane pass occupies residues 356–376 (VFLFLVNSSGAIALLVYLVIA). The Cytoplasmic portion of the chain corresponds to 377 to 401 (VSQLKMRKKLEKTNPEALKIKMWLF). A helical transmembrane segment spans residues 402 to 422 (PFLTYLTIIAICGILVSMAFI). Residues 423–425 (DSM) are Extracellular-facing. The helical transmembrane segment at 426 to 446 (RDELLLTGVITGIVLISYLVF) threads the bilayer. Residues 447–469 (RKRKVSEKAAANPVTQQQPDILP) lie on the Cytoplasmic side of the membrane.

This sequence belongs to the amino acid-polyamine-organocation (APC) superfamily. Amino acid transporter (AAT) (TC 2.A.3.1) family.

It localises to the cell membrane. The enzyme catalyses 4-aminobutanoate(in) + H(+)(in) = 4-aminobutanoate(out) + H(+)(out). It carries out the reaction beta-alanine(in) + H(+)(in) = beta-alanine(out) + H(+)(out). It functions in the pathway amino-acid degradation; 4-aminobutanoate degradation. Its function is as follows. Transporter for gamma-aminobutyrate (GABA). Can also transport beta-alanine. Can translocate several open-chain GABA analogs (3-aminobutyrate, 3-aminopropanoate, cis-4-aminobutenoate) across the membrane via counterflow against GABA, but cannot transport muscimol. Also functions as a low-affinity proline importer. In Bacillus subtilis (strain 168), this protein is Gamma-aminobutyric acid permease.